Here is a 1151-residue protein sequence, read N- to C-terminus: Chromosome partition protein Smc (1151 aa).

An ATP-binding site is contributed by 32 to 39 (PNGCGKSN). Coiled-coil stretches lie at residues 170–218 (ISGL…AARY), 342–379 (IGRL…ALGE), 407–508 (DSRT…REAQ), and 633–994 (LKQL…EGRE). 2 stretches are compositionally biased toward basic and acidic residues: residues 421–438 (RARE…RAAE) and 465–480 (DEAR…EARA). Disordered stretches follow at residues 421-483 (RARE…AQRS), 806-826 (SAEL…AAEA), and 862-889 (LRAA…AEAR). The segment covering 866-889 (QEAEREAERQAGESREARARAEAR) has biased composition (basic and acidic residues).

The protein belongs to the SMC family. As to quaternary structure, homodimer.

It is found in the cytoplasm. Functionally, required for chromosome condensation and partitioning. The protein is Chromosome partition protein Smc of Cereibacter sphaeroides (strain ATCC 17029 / ATH 2.4.9) (Rhodobacter sphaeroides).